Reading from the N-terminus, the 473-residue chain is Photosystem II CP43 reaction center protein (473 aa).

Residues 1–14 (MKTLYSLRRFYPVE) constitute a propeptide that is removed on maturation. T15 carries the N-acetylthreonine modification. The residue at position 15 (T15) is a Phosphothreonine. The next 5 membrane-spanning stretches (helical) occupy residues 69-93 (LFEVAHFVPEKPMYEQGFILLPHLA), 134-155 (LLGPETLEESFPFFGYVWKDRN), 178-200 (KALSFGGVYDTWAPGGGDVRKIT), 255-275 (KPFAWARRALVWSGEAYLSYS), and 291-312 (WFNNTAYPSEFYGPTGPEASQA). E367 contributes to the [CaMn4O5] cluster binding site. A helical membrane pass occupies residues 447–471 (RARAAAAGFEKGIDRDFEPVLSMTP).

Belongs to the PsbB/PsbC family. PsbC subfamily. In terms of assembly, PSII is composed of 1 copy each of membrane proteins PsbA, PsbB, PsbC, PsbD, PsbE, PsbF, PsbH, PsbI, PsbJ, PsbK, PsbL, PsbM, PsbT, PsbX, PsbY, PsbZ, Psb30/Ycf12, at least 3 peripheral proteins of the oxygen-evolving complex and a large number of cofactors. It forms dimeric complexes. Requires Binds multiple chlorophylls and provides some of the ligands for the Ca-4Mn-5O cluster of the oxygen-evolving complex. It may also provide a ligand for a Cl- that is required for oxygen evolution. PSII binds additional chlorophylls, carotenoids and specific lipids. as cofactor.

It localises to the plastid. The protein resides in the chloroplast thylakoid membrane. One of the components of the core complex of photosystem II (PSII). It binds chlorophyll and helps catalyze the primary light-induced photochemical processes of PSII. PSII is a light-driven water:plastoquinone oxidoreductase, using light energy to abstract electrons from H(2)O, generating O(2) and a proton gradient subsequently used for ATP formation. This Pelargonium hortorum (Common geranium) protein is Photosystem II CP43 reaction center protein.